A 359-amino-acid chain; its full sequence is Alanine racemase, biosynthetic (359 aa).

The active-site Proton acceptor; specific for D-alanine is K34. K34 carries the post-translational modification N6-(pyridoxal phosphate)lysine. R129 provides a ligand contact to substrate. Y255 functions as the Proton acceptor; specific for L-alanine in the catalytic mechanism. Position 303 (M303) interacts with substrate.

It belongs to the alanine racemase family. Pyridoxal 5'-phosphate serves as cofactor.

It carries out the reaction L-alanine = D-alanine. Its pathway is amino-acid biosynthesis; D-alanine biosynthesis; D-alanine from L-alanine: step 1/1. It participates in cell wall biogenesis; peptidoglycan biosynthesis. Catalyzes the interconversion of L-alanine and D-alanine. Provides the D-alanine required for cell wall biosynthesis. In Escherichia coli O157:H7, this protein is Alanine racemase, biosynthetic (alr).